A 1394-amino-acid chain; its full sequence is DNA-directed RNA polymerase subunit beta (1394 aa).

Belongs to the RNA polymerase beta chain family. As to quaternary structure, the RNAP catalytic core consists of 2 alpha, 1 beta, 1 beta' and 1 omega subunit. When a sigma factor is associated with the core the holoenzyme is formed, which can initiate transcription.

It carries out the reaction RNA(n) + a ribonucleoside 5'-triphosphate = RNA(n+1) + diphosphate. In terms of biological role, DNA-dependent RNA polymerase catalyzes the transcription of DNA into RNA using the four ribonucleoside triphosphates as substrates. This is DNA-directed RNA polymerase subunit beta from Anaplasma phagocytophilum (Ehrlichia phagocytophila).